The chain runs to 289 residues: Secretory carrier-associated membrane protein (289 aa).

Residues 1–65 (MAGRYDPNPF…TSTDGKKKER (65 aa)) are disordered. Residues 1 to 123 (MAGRYDPNPF…EIPIHLRTLQ (123 aa)) lie on the Cytoplasmic side of the membrane. Residues 16-31 (NPFSNPRSAASATNSR) show a composition bias toward polar residues. Residues 59–98 (DGKKKERDLQAKEAELRKREQEVRRKEEAIARAGIVIEEK) are a coiled coil. A run of 4 helical transmembrane segments spans residues 124-144 (YVAFFSLLGLVLCLTWNVVSV), 156-176 (IWFLAIIYFIAGVPGAYALWY), 191-211 (FGWFFMFYLLHIGFCILAAVA), and 239-259 (IFYFIGFGFFCLETLISIWVI). The Cytoplasmic portion of the chain corresponds to 260-289 (QQVYMHFRGGGKTAEMKREAALGAMGAALR).

Belongs to the SCAMP family.

The protein resides in the cell membrane. The protein localises to the cytoplasmic vesicle. It localises to the secretory vesicle membrane. Its function is as follows. Probably involved in membrane trafficking. This chain is Secretory carrier-associated membrane protein (PSAM2), found in Pisum sativum (Garden pea).